Here is a 229-residue protein sequence, read N- to C-terminus: MEEKAKAEQKKIGMTETWLKKHRLLYNGATRHPLIISIRDGTINTASFKTWLAQDYLFVRAFVPFVASVLIKAWKESDCSGDMEVILGGMASLEDEISWFKTEANKWGISLSDVVPQQANKNYCGLLESLMSPDAEYTVAITAFWAIETVYQESFAHCIEEGSKTPPELKETCVRWGNEAFGKYCQSLQNIANRCLQKASDEELKKAEVMLLSVLEHEVEFWNMSRGNV.

A disulfide bridge links Cys-158 with Cys-173.

This sequence belongs to the thiaminase-2 family.

The catalysed reaction is 4-amino-5-aminomethyl-2-methylpyrimidine + H2O = 4-amino-5-hydroxymethyl-2-methylpyrimidine + NH4(+). It carries out the reaction N-formyl-4-amino-5-aminomethyl-2-methylpyrimidine + H2O = 4-amino-5-aminomethyl-2-methylpyrimidine + formate. Its pathway is cofactor biosynthesis; thiamine diphosphate biosynthesis. In terms of biological role, may be involved in thiamine salvage. The chain is Probable bifunctional TENA-E protein from Glycine max (Soybean).